Consider the following 449-residue polypeptide: Glucose-6-phosphate isomerase (449 aa).

The Proton donor role is filled by Glu291. Active-site residues include His312 and Lys426.

Belongs to the GPI family.

It localises to the cytoplasm. The catalysed reaction is alpha-D-glucose 6-phosphate = beta-D-fructose 6-phosphate. The protein operates within carbohydrate biosynthesis; gluconeogenesis. It participates in carbohydrate degradation; glycolysis; D-glyceraldehyde 3-phosphate and glycerone phosphate from D-glucose: step 2/4. In terms of biological role, catalyzes the reversible isomerization of glucose-6-phosphate to fructose-6-phosphate. The chain is Glucose-6-phosphate isomerase from Streptococcus equi subsp. zooepidemicus (strain MGCS10565).